The sequence spans 306 residues: Peroxisome biogenesis factor 2 (306 aa).

Over 1 to 15 (MAASENNMEEINPVL) the chain is Peroxisomal matrix. A helical membrane pass occupies residues 16-42 (RISQLDAIELNKALEQLIWSQFSSCFQ). At 43–48 (GFKPGL) the chain is on the cytoplasmic side. The chain crosses the membrane as a helical span at residues 49-74 (LTRFEPEIKASLCLFLWRYTIYTKNA). Residues 75–98 (TVGQTILNMQYKNDLAVTKKYRPL) are Peroxisomal matrix-facing. A helical membrane pass occupies residues 99–125 (NKQQKVWFALFLVGGKWLEERSFDLFS). The Cytoplasmic segment spans residues 126–134 (NHPFGASFQ). The helical transmembrane segment at 135–161 (RTKYFLNAISGLLKFGALLNFLIFLQQ) threads the bilayer. Over 162-188 (GKFATLTERLLGIRSVFSRPQDVRQVG) the chain is Peroxisomal matrix. The helical transmembrane segment at 189 to 212 (FEYMNREILWHGFAEFLIFLLPLI) threads the bilayer. At 213–306 (NTQKLKSKLF…KIEISEVHTL (94 aa)) the chain is on the cytoplasmic side. Zn(2+)-binding residues include Cys245, Cys248, Cys260, His262, Cys265, Cys268, Cys281, and Cys284. An RING-type zinc finger spans residues 245–285 (CCLCGEWPAMPHTIGCSHVFCYYCIKSNYMSDMYFTCPKCS).

Belongs to the pex2/pex10/pex12 family. Component of the PEX2-PEX10-PEX12 retrotranslocation channel.

The protein localises to the peroxisome membrane. It carries out the reaction [E2 ubiquitin-conjugating enzyme]-S-ubiquitinyl-L-cysteine + [acceptor protein]-L-cysteine = [E2 ubiquitin-conjugating enzyme]-L-cysteine + [acceptor protein]-S-ubiquitinyl-L-cysteine.. The catalysed reaction is S-ubiquitinyl-[E2 ubiquitin-conjugating enzyme]-L-cysteine + [acceptor protein]-L-lysine = [E2 ubiquitin-conjugating enzyme]-L-cysteine + N(6)-ubiquitinyl-[acceptor protein]-L-lysine.. Its pathway is protein modification; protein ubiquitination. Functionally, E3 ubiquitin-protein ligase component of a retrotranslocation channel required for peroxisome organization by mediating export of the PEX5 receptor from peroxisomes to the cytosol, thereby promoting PEX5 recycling. The retrotranslocation channel is composed of PEX2, PEX10 and PEX12; each subunit contributing transmembrane segments that coassemble into an open channel that specifically allows the passage of PEX5 through the peroxisomal membrane. PEX2 also regulates peroxisome organization by acting as a E3 ubiquitin-protein ligase. This chain is Peroxisome biogenesis factor 2, found in Xenopus laevis (African clawed frog).